Consider the following 147-residue polypeptide: Protein phosphatase 1 regulatory subunit 14A (147 aa).

The segment covering 1–11 (MAAQRLGKRVL) has biased composition (basic residues). Residues 1–37 (MAAQRLGKRVLSKLQSPSRARGPGGSPGGLQKRHARV) form a disordered region. Serine 26 is modified (phosphoserine). The interval 35–120 (ARVTVKYDRR…LLAKLQGLHR (86 aa)) is inhibitory. Threonine 38 is modified (phosphothreonine; by PKC). The segment at 118–147 (LHRQPGLRQPSPSHDGSLSPLQDRARTAHP) is disordered. The segment covering 127–137 (PSPSHDGSLSP) has biased composition (polar residues). A phosphoserine mark is found at serine 128, serine 134, and serine 136.

The protein belongs to the PP1 inhibitor family. In terms of tissue distribution, isoform 1 is detected in aorta and testis. Isoform 2 is detected in aorta.

It is found in the cytoplasm. Its function is as follows. Inhibitor of PPP1CA. Has over 1000-fold higher inhibitory activity when phosphorylated, creating a molecular switch for regulating the phosphorylation status of PPP1CA substrates and smooth muscle contraction. The sequence is that of Protein phosphatase 1 regulatory subunit 14A (PPP1R14A) from Homo sapiens (Human).